The following is a 317-amino-acid chain: L-lactate dehydrogenase (317 aa).

NAD(+) is bound by residues Val-17, Asp-38, Lys-43, and 82–83 (GA). Residues Gln-85, Arg-91, and 123 to 126 (NPVD) contribute to the substrate site. Residues 121 to 123 (VAN) and Ser-146 each bind NAD(+). 151–154 (DSAR) is a substrate binding site. Beta-D-fructose 1,6-bisphosphate-binding residues include Arg-156 and His-171. The Proton acceptor role is filled by His-178. Tyr-224 is modified (phosphotyrosine). Thr-233 contacts substrate.

Belongs to the LDH/MDH superfamily. LDH family. In terms of assembly, homotetramer.

The protein resides in the cytoplasm. It catalyses the reaction (S)-lactate + NAD(+) = pyruvate + NADH + H(+). It participates in fermentation; pyruvate fermentation to lactate; (S)-lactate from pyruvate: step 1/1. Allosterically activated by fructose 1,6-bisphosphate (FBP). Catalyzes the conversion of lactate to pyruvate. This chain is L-lactate dehydrogenase, found in Moorella thermoacetica (strain ATCC 39073 / JCM 9320).